Consider the following 481-residue polypeptide: Ribulose bisphosphate carboxylase large chain (481 aa).

Residues 1-2 (MS) constitute a propeptide that is removed on maturation. Proline 3 is subject to N-acetylproline. Lysine 14 is modified (N6,N6,N6-trimethyllysine). The substrate site is built by asparagine 123 and threonine 173. Lysine 175 acts as the Proton acceptor in catalysis. A substrate-binding site is contributed by lysine 177. Mg(2+) contacts are provided by lysine 201, aspartate 203, and glutamate 204. Position 201 is an N6-carboxylysine (lysine 201). Residue histidine 294 is the Proton acceptor of the active site. Residues arginine 295, histidine 327, and serine 379 each contribute to the substrate site.

This sequence belongs to the RuBisCO large chain family. Type I subfamily. As to quaternary structure, heterohexadecamer of 8 large chains and 8 small chains; disulfide-linked. The disulfide link is formed within the large subunit homodimers. It depends on Mg(2+) as a cofactor. Post-translationally, the disulfide bond which can form in the large chain dimeric partners within the hexadecamer appears to be associated with oxidative stress and protein turnover.

The protein resides in the plastid. Its subcellular location is the chloroplast. The enzyme catalyses 2 (2R)-3-phosphoglycerate + 2 H(+) = D-ribulose 1,5-bisphosphate + CO2 + H2O. The catalysed reaction is D-ribulose 1,5-bisphosphate + O2 = 2-phosphoglycolate + (2R)-3-phosphoglycerate + 2 H(+). Functionally, ruBisCO catalyzes two reactions: the carboxylation of D-ribulose 1,5-bisphosphate, the primary event in carbon dioxide fixation, as well as the oxidative fragmentation of the pentose substrate in the photorespiration process. Both reactions occur simultaneously and in competition at the same active site. This is Ribulose bisphosphate carboxylase large chain from Coffea arabica (Arabian coffee).